The chain runs to 137 residues: Transcription antitermination protein NusB (137 aa).

This sequence belongs to the NusB family.

Its function is as follows. Involved in transcription antitermination. Required for transcription of ribosomal RNA (rRNA) genes. Binds specifically to the boxA antiterminator sequence of the ribosomal RNA (rrn) operons. The protein is Transcription antitermination protein NusB of Clavibacter sepedonicus (Clavibacter michiganensis subsp. sepedonicus).